The following is a 107-amino-acid chain: Thioredoxin (107 aa).

The region spanning 2–107 (AGVLKNVTDD…ALLRPGPVPR (106 aa)) is the Thioredoxin domain. Cys33 and Cys36 are disulfide-bonded.

This sequence belongs to the thioredoxin family.

Component of the thioredoxin-thioredoxin reductase system. Participates in various redox reactions through the reversible oxidation of its active center dithiol to a disulfide and catalyzes dithiol-disulfide exchange reactions. The protein is Thioredoxin (trxA) of Streptomyces clavuligerus.